The primary structure comprises 302 residues: MVQPGTEIKASDLTLLVITIILFAIFIVGLASVCFRWTSRQFYSQESINPFTDSDVESRTSITAVRGLDEAIINSFPTFLYSEVKERRIGIGGVECAVCICEFEDHETLRLMPECCHVFHADCVSVWLSDHSTCPLCRVDLCLQPGERSYLNPEPDLVESTNSHLFDGVTWTNRNRPSRSWSTRLSQCRVSQILISRSHSTGHSVVQPLDNLDRFTLRLPEEVRRQLTKKTVDNVAFSQARSSRRGYRSRSAGSERSVFSYQRRMHSFSDCAWSTSCGGEAVAPSKDSRRISVEQSQLDDRV.

The helical transmembrane segment at 15-35 (LLVITIILFAIFIVGLASVCF) threads the bilayer. An RING-type; atypical zinc finger spans residues 96 to 138 (CAVCICEFEDHETLRLMPECCHVFHADCVSVWLSDHSTCPLCR). Residues 279-302 (GEAVAPSKDSRRISVEQSQLDDRV) are disordered. Residues 286-302 (KDSRRISVEQSQLDDRV) show a composition bias toward basic and acidic residues.

This sequence belongs to the RING-type zinc finger family. ATL subfamily.

Its subcellular location is the membrane. It carries out the reaction S-ubiquitinyl-[E2 ubiquitin-conjugating enzyme]-L-cysteine + [acceptor protein]-L-lysine = [E2 ubiquitin-conjugating enzyme]-L-cysteine + N(6)-ubiquitinyl-[acceptor protein]-L-lysine.. Its pathway is protein modification; protein ubiquitination. This chain is RING-H2 finger protein ATL38 (ATL38), found in Arabidopsis thaliana (Mouse-ear cress).